We begin with the raw amino-acid sequence, 69 residues long: Large ribosomal subunit protein uL30 (69 aa).

This sequence belongs to the universal ribosomal protein uL30 family. As to quaternary structure, part of the 50S ribosomal subunit.

The polypeptide is Large ribosomal subunit protein uL30 (Rhizobium etli (strain ATCC 51251 / DSM 11541 / JCM 21823 / NBRC 15573 / CFN 42)).